A 153-amino-acid polypeptide reads, in one-letter code: 6,7-dimethyl-8-ribityllumazine synthase (153 aa).

5-amino-6-(D-ribitylamino)uracil-binding positions include Phe-21, 55-57 (AFE), and 79-81 (TVI). 84–85 (AT) lines the (2S)-2-hydroxy-3-oxobutyl phosphate pocket. Residue His-87 is the Proton donor of the active site. Phe-112 contributes to the 5-amino-6-(D-ribitylamino)uracil binding site. Position 126 (Arg-126) interacts with (2S)-2-hydroxy-3-oxobutyl phosphate.

The protein belongs to the DMRL synthase family. In terms of assembly, forms an icosahedral capsid composed of 60 subunits, arranged as a dodecamer of pentamers.

It catalyses the reaction (2S)-2-hydroxy-3-oxobutyl phosphate + 5-amino-6-(D-ribitylamino)uracil = 6,7-dimethyl-8-(1-D-ribityl)lumazine + phosphate + 2 H2O + H(+). It functions in the pathway cofactor biosynthesis; riboflavin biosynthesis; riboflavin from 2-hydroxy-3-oxobutyl phosphate and 5-amino-6-(D-ribitylamino)uracil: step 1/2. Its function is as follows. Catalyzes the formation of 6,7-dimethyl-8-ribityllumazine by condensation of 5-amino-6-(D-ribitylamino)uracil with 3,4-dihydroxy-2-butanone 4-phosphate. This is the penultimate step in the biosynthesis of riboflavin. In Bacillus cereus (strain ATCC 10987 / NRS 248), this protein is 6,7-dimethyl-8-ribityllumazine synthase.